A 406-amino-acid chain; its full sequence is Cysteine desulfurase (406 aa).

Residue Lys-226 is modified to N6-(pyridoxal phosphate)lysine. Residue Cys-364 is the Cysteine persulfide intermediate of the active site.

It belongs to the class-V pyridoxal-phosphate-dependent aminotransferase family. Csd subfamily. In terms of assembly, homodimer. Interacts with SufE and the SufBCD complex composed of SufB, SufC and SufD. The interaction with SufE is required to mediate the direct transfer of the sulfur atom from the S-sulfanylcysteine. Requires pyridoxal 5'-phosphate as cofactor.

Its subcellular location is the cytoplasm. The enzyme catalyses (sulfur carrier)-H + L-cysteine = (sulfur carrier)-SH + L-alanine. The catalysed reaction is L-selenocysteine + AH2 = hydrogenselenide + L-alanine + A + H(+). It participates in cofactor biosynthesis; iron-sulfur cluster biosynthesis. Functionally, cysteine desulfurases mobilize the sulfur from L-cysteine to yield L-alanine, an essential step in sulfur metabolism for biosynthesis of a variety of sulfur-containing biomolecules. Component of the suf operon, which is activated and required under specific conditions such as oxidative stress and iron limitation. Acts as a potent selenocysteine lyase in vitro, that mobilizes selenium from L-selenocysteine. Selenocysteine lyase activity is however unsure in vivo. The chain is Cysteine desulfurase from Escherichia coli (strain SE11).